The primary structure comprises 392 residues: LL-diaminopimelate aminotransferase (392 aa).

2 residues coordinate substrate: Y13 and G38. Residues Y67, 102–103 (SK), Y127, N177, Y208, and 236–238 (SCS) contribute to the pyridoxal 5'-phosphate site. 3 residues coordinate substrate: K103, Y127, and N177. The residue at position 239 (K239) is an N6-(pyridoxal phosphate)lysine. Position 247 (R247) interacts with pyridoxal 5'-phosphate. R366 contributes to the substrate binding site.

It belongs to the class-I pyridoxal-phosphate-dependent aminotransferase family. LL-diaminopimelate aminotransferase subfamily. As to quaternary structure, homodimer. The cofactor is pyridoxal 5'-phosphate.

It carries out the reaction (2S,6S)-2,6-diaminopimelate + 2-oxoglutarate = (S)-2,3,4,5-tetrahydrodipicolinate + L-glutamate + H2O + H(+). The protein operates within amino-acid biosynthesis; L-lysine biosynthesis via DAP pathway; LL-2,6-diaminopimelate from (S)-tetrahydrodipicolinate (aminotransferase route): step 1/1. Its function is as follows. Involved in the synthesis of meso-diaminopimelate (m-DAP or DL-DAP), required for both lysine and peptidoglycan biosynthesis. Catalyzes the direct conversion of tetrahydrodipicolinate to LL-diaminopimelate. Can also use m-DAP instead of LL-DAP as the amino-group donor. This is LL-diaminopimelate aminotransferase from Gloeobacter violaceus (strain ATCC 29082 / PCC 7421).